Reading from the N-terminus, the 563-residue chain is Minor fimbrium subunit Mfa1 (563 aa).

A signal peptide spans 1 to 19 (MKLNKMFLVGALLSLGFAS). The N-palmitoyl cysteine moiety is linked to residue Cys-20. A lipid anchor (S-diacylglycerol cysteine) is attached at Cys-20. A propeptide spanning residues 20 to 49 (CSKEGNGPDPDNAAKSYMSMTLSMPMGSAR) is cleaved from the precursor. The tract at residues 504–543 (LVPDPDPSNPENPNNPDPNPDEPGTPVPTDPENPLPDQDT) is disordered. Pro residues predominate over residues 505 to 537 (VPDPDPSNPENPNNPDPNPDEPGTPVPTDPENP).

It belongs to the bacteroidetes fimbrillin superfamily. Structural component of the fimbrial stalk. Minor fimbriae are composed of a structural subunit, most often Mfa1, and the accessory subunits Mfa3, Mfa4 and Mfa5. Mfa1 interacts with Mfa2; this anchors the fimbrium in the membrane. Fimbrium assembly occurs by linear, head-to-tail oligomerization of fimbrial subunits. This is mediated via insertion of a C-terminal beta-strand from one subunit into a groove in the N-terminal domain of the following subunit. Interacts with S.gordonii ssp5.

It localises to the fimbrium. The protein resides in the cell outer membrane. Structural subunit of the minor fimbriae. These filamentous pili are attached to the cell surface; they mediate biofilm formation, adhesion onto host cells and onto other bacteria that are part of the oral microbiome. They play an important role in invasion of periodontal tissues and are recognized as major virulence factors. Mfa1 orthologs from different strains have highly divergent sequences, and this correlates with pathogenicity. This Porphyromonas gingivalis (strain ATCC 33277 / DSM 20709 / CIP 103683 / JCM 12257 / NCTC 11834 / 2561) protein is Minor fimbrium subunit Mfa1.